Reading from the N-terminus, the 150-residue chain is Large ribosomal subunit protein bL9 (150 aa).

It belongs to the bacterial ribosomal protein bL9 family.

Functionally, binds to the 23S rRNA. This Vibrio parahaemolyticus serotype O3:K6 (strain RIMD 2210633) protein is Large ribosomal subunit protein bL9.